The following is a 136-amino-acid chain: Putative pre-16S rRNA nuclease (136 aa).

This sequence belongs to the YqgF nuclease family.

The protein resides in the cytoplasm. Could be a nuclease involved in processing of the 5'-end of pre-16S rRNA. This Francisella tularensis subsp. tularensis (strain FSC 198) protein is Putative pre-16S rRNA nuclease.